A 75-amino-acid chain; its full sequence is MASPASANMNAVRETMDVLLEISRLLNTGLDMESLSICVRLCEQGINPEALSSVIKELRRASDSLKASENSTSQG.

It belongs to the MOZART1 family. In terms of assembly, part of the gamma-tubulin complex.

The protein resides in the cytoplasm. Its subcellular location is the cytoskeleton. The protein localises to the microtubule organizing center. It localises to the centrosome. It is found in the spindle. Functionally, required for gamma-tubulin complex recruitment to the centrosome. In Danio rerio (Zebrafish), this protein is Mitotic-spindle organizing protein 1 (mzt1).